The primary structure comprises 622 residues: MDEFVKGLMKNGYLITPSAYYLLVGHFNEGKFSLIELIKFAKSRETFIIDDEIANEFLKSIGAEVELPQEIKEGYISTGEGSQKVPDHEELEKITNESSVESSISTGETPKTEELQPTLDILEEEIGDIEGGESSISTGDEVPEVENNNGGTVVVFDKYGYPFTYVPEEIEEELEEYPKYEDVTIEINPNLEVVPIEKDYEIKFDVRRVKLKPPKVKSGSGKEGEIIVEAYASLFRSRLRKLRRILRENPEVSNVIDIKKLKYVKGDEEVTIIGLVNSKKETSKGLIFEVEDQTDRVKVFLPKDSEDYREALKVLPDAVVAFKGVYSKRGIFFANRFYLPDVPLYRKQKPPLEEKVYAVLTSDIHVGSKEFCEKAFIKFLEWLNGYVESKEEEEIVSRIRYLIIAGDVVDGIGIYPGQYSDLIIPDIFDQYEALANLLSNVPKHITIFIGPGNHDAARPAIPQPEFYEEYAKPLYKLKNTVIISNPAVIRLHGRDFLIAHGRGIEDVVSFVPGLTHHKPGLPMVELLKMRHLAPTFGGKVPIAPDPEDLLVIEEVPDLVQMGHVHVYDTAVYRGVQLVNSATWQAQTEFQKMVNIVPTPGLVPIVDVESARVIKVLDFSRWC.

The interval 76–113 (ISTGEGSQKVPDHEELEKITNESSVESSISTGETPKTE) is disordered. Over residues 85–95 (VPDHEELEKIT) the composition is skewed to basic and acidic residues. The span at 96–109 (NESSVESSISTGET) shows a compositional bias: polar residues.

It belongs to the DNA polymerase delta/II small subunit family. In terms of assembly, heterodimer of a large subunit and a small subunit.

It carries out the reaction DNA(n) + a 2'-deoxyribonucleoside 5'-triphosphate = DNA(n+1) + diphosphate. The enzyme catalyses Exonucleolytic cleavage in the 3'- to 5'-direction to yield nucleoside 5'-phosphates.. In terms of biological role, possesses two activities: a DNA synthesis (polymerase) and an exonucleolytic activity that degrades single-stranded DNA in the 3' to 5' direction. Has a template-primer preference which is characteristic of a replicative DNA polymerase. This chain is DNA polymerase II small subunit (polB), found in Pyrococcus horikoshii (strain ATCC 700860 / DSM 12428 / JCM 9974 / NBRC 100139 / OT-3).